Reading from the N-terminus, the 436-residue chain is Trigger factor (436 aa).

The region spanning 163 to 248 is the PPIase FKBP-type domain; that stretch reads TDRVIIDFAG…VKNVAEAILP (86 aa).

This sequence belongs to the FKBP-type PPIase family. Tig subfamily.

The protein localises to the cytoplasm. It carries out the reaction [protein]-peptidylproline (omega=180) = [protein]-peptidylproline (omega=0). Functionally, involved in protein export. Acts as a chaperone by maintaining the newly synthesized protein in an open conformation. Functions as a peptidyl-prolyl cis-trans isomerase. The sequence is that of Trigger factor from Laribacter hongkongensis (strain HLHK9).